A 383-amino-acid polypeptide reads, in one-letter code: E3 ubiquitin-protein ligase Os04g0590900 (383 aa).

Residues 53–73 form a helical membrane-spanning segment; it reads PVFSPLVIAIIGVLASAFLLV. The segment at 105–129 is disordered; that stretch reads GGAGSGGRHGHGQSRSHESWNVSPP. Residues 157–199 form an RING-type; atypical zinc finger; sequence CSVCLGEFSDGESLRLLPRCSHAFHQQCIDTWLKSHSNCPLCR. Disordered stretches follow at residues 269–291 and 320–383; these read EANG…SSFD and LLAG…DHPM.

It localises to the membrane. The catalysed reaction is S-ubiquitinyl-[E2 ubiquitin-conjugating enzyme]-L-cysteine + [acceptor protein]-L-lysine = [E2 ubiquitin-conjugating enzyme]-L-cysteine + N(6)-ubiquitinyl-[acceptor protein]-L-lysine.. It functions in the pathway protein modification; protein ubiquitination. Its function is as follows. Possesses E3 ubiquitin-protein ligase in vitro. The chain is E3 ubiquitin-protein ligase Os04g0590900 from Oryza sativa subsp. japonica (Rice).